The following is a 63-amino-acid chain: uncharacterized protein (63 aa).

An N-terminal signal peptide occupies residues 1–18 (MLNSEHFNLIQRALDATA).

This is an uncharacterized protein from Bacillus subtilis (strain 168).